We begin with the raw amino-acid sequence, 413 residues long: Gamma-glutamyl phosphate reductase (413 aa).

Belongs to the gamma-glutamyl phosphate reductase family.

The protein localises to the cytoplasm. It catalyses the reaction L-glutamate 5-semialdehyde + phosphate + NADP(+) = L-glutamyl 5-phosphate + NADPH + H(+). The protein operates within amino-acid biosynthesis; L-proline biosynthesis; L-glutamate 5-semialdehyde from L-glutamate: step 2/2. Functionally, catalyzes the NADPH-dependent reduction of L-glutamate 5-phosphate into L-glutamate 5-semialdehyde and phosphate. The product spontaneously undergoes cyclization to form 1-pyrroline-5-carboxylate. In Salinispora tropica (strain ATCC BAA-916 / DSM 44818 / JCM 13857 / NBRC 105044 / CNB-440), this protein is Gamma-glutamyl phosphate reductase.